We begin with the raw amino-acid sequence, 428 residues long: Gamma-glutamyl phosphate reductase (428 aa).

This sequence belongs to the gamma-glutamyl phosphate reductase family.

The protein resides in the cytoplasm. The catalysed reaction is L-glutamate 5-semialdehyde + phosphate + NADP(+) = L-glutamyl 5-phosphate + NADPH + H(+). Its pathway is amino-acid biosynthesis; L-proline biosynthesis; L-glutamate 5-semialdehyde from L-glutamate: step 2/2. Catalyzes the NADPH-dependent reduction of L-glutamate 5-phosphate into L-glutamate 5-semialdehyde and phosphate. The product spontaneously undergoes cyclization to form 1-pyrroline-5-carboxylate. The sequence is that of Gamma-glutamyl phosphate reductase from Clostridium tetani (strain Massachusetts / E88).